Consider the following 630-residue polypeptide: MEKLLDRIDSPADLKKLQVSELTKLAEEIRQEMITVLSKCGGHLGPNLGVVELTLALHYVFDVPRDHFVFDVSHQAYVHKLITGRKNRFHTIRQHGGISGFMSREESEYDCYGAGHAGTALSAALGMAVARDRRGGKEHVIALCGDAAFTCGITFEALNNVASTTQRLIVILNDNEWSIDKNVGAIASYFNKIVTNPAYSYLRDRVEKVLEKWPGKNVLKVARKAEEAFKSLLWPSVIFEELGLTYHGPIDGHDIARLISTFEFLKNQEYPVLLHVITQKGRGFPPALEKQKKFHGLGPYNPITGETPSSPRKTFSEVFAETMIKLADMNRNVVAITAAMPNGTALDKFQPKFPDRYFDVGIAEEHAVIFAAGMATKGFKPYCAIYSTFLQRAYDPIIHDVCLQKLPVVFCLDRGGLSGDDGPTHHGLFDVAYLRTVPNITIMHPKDEDELADMLFTAMHHPGPVAIRYPRGSGSGVAVKERPELIPIGRAEVIKHGRDVAIFSLGIMVEMGKELAQKLEECGYSAALINPRTVKPFDRGTLEFFARSVDLIVSIEDHVLAGGFGSLILEELQALGLRIPVVRIGWPDKFIEHGKVDILRKKYGITVENALEQSLKILKHPKSDTNLEIA.

Residues histidine 74 and 115-117 contribute to the thiamine diphosphate site; that span reads GHA. Aspartate 146 contributes to the Mg(2+) binding site. Thiamine diphosphate contacts are provided by residues 147 to 148, asparagine 175, phenylalanine 284, and glutamate 364; that span reads AA. Residue asparagine 175 participates in Mg(2+) binding.

Belongs to the transketolase family. DXPS subfamily. As to quaternary structure, homodimer. The cofactor is Mg(2+). Thiamine diphosphate serves as cofactor.

It catalyses the reaction D-glyceraldehyde 3-phosphate + pyruvate + H(+) = 1-deoxy-D-xylulose 5-phosphate + CO2. It functions in the pathway metabolic intermediate biosynthesis; 1-deoxy-D-xylulose 5-phosphate biosynthesis; 1-deoxy-D-xylulose 5-phosphate from D-glyceraldehyde 3-phosphate and pyruvate: step 1/1. Catalyzes the acyloin condensation reaction between C atoms 2 and 3 of pyruvate and glyceraldehyde 3-phosphate to yield 1-deoxy-D-xylulose-5-phosphate (DXP). This chain is 1-deoxy-D-xylulose-5-phosphate synthase, found in Methylacidiphilum infernorum (isolate V4) (Methylokorus infernorum (strain V4)).